The chain runs to 325 residues: uncharacterized protein (325 aa).

Tyrosine 59 functions as the Proton donor in the catalytic mechanism. Residue histidine 117 participates in substrate binding.

It belongs to the aldo/keto reductase family.

Its subcellular location is the cytoplasm. The protein resides in the nucleus. This is an uncharacterized protein from Schizosaccharomyces pombe (strain 972 / ATCC 24843) (Fission yeast).